The sequence spans 601 residues: Proline--tRNA ligase (601 aa).

The protein belongs to the class-II aminoacyl-tRNA synthetase family. ProS type 1 subfamily. Homodimer.

The protein resides in the cytoplasm. The enzyme catalyses tRNA(Pro) + L-proline + ATP = L-prolyl-tRNA(Pro) + AMP + diphosphate. In terms of biological role, catalyzes the attachment of proline to tRNA(Pro) in a two-step reaction: proline is first activated by ATP to form Pro-AMP and then transferred to the acceptor end of tRNA(Pro). As ProRS can inadvertently accommodate and process non-cognate amino acids such as alanine and cysteine, to avoid such errors it has two additional distinct editing activities against alanine. One activity is designated as 'pretransfer' editing and involves the tRNA(Pro)-independent hydrolysis of activated Ala-AMP. The other activity is designated 'posttransfer' editing and involves deacylation of mischarged Ala-tRNA(Pro). The misacylated Cys-tRNA(Pro) is not edited by ProRS. The protein is Proline--tRNA ligase of Trichodesmium erythraeum (strain IMS101).